The following is a 608-amino-acid chain: DNA mismatch repair protein MutL (608 aa).

It belongs to the DNA mismatch repair MutL/HexB family.

In terms of biological role, this protein is involved in the repair of mismatches in DNA. It is required for dam-dependent methyl-directed DNA mismatch repair. May act as a 'molecular matchmaker', a protein that promotes the formation of a stable complex between two or more DNA-binding proteins in an ATP-dependent manner without itself being part of a final effector complex. In Anaeromyxobacter dehalogenans (strain 2CP-C), this protein is DNA mismatch repair protein MutL.